The chain runs to 371 residues: Queuine tRNA-ribosyltransferase (371 aa).

The Proton acceptor role is filled by D90. Residues 90–94 (DSGGF), D144, Q188, and G215 contribute to the substrate site. Positions 246–252 (GVGTPED) are RNA binding. The active-site Nucleophile is D265. The RNA binding; important for wobble base 34 recognition stretch occupies residues 270-274 (TRNAR). Residues C303, C305, C308, and H334 each contribute to the Zn(2+) site.

It belongs to the queuine tRNA-ribosyltransferase family. As to quaternary structure, homodimer. Within each dimer, one monomer is responsible for RNA recognition and catalysis, while the other monomer binds to the replacement base PreQ1. Requires Zn(2+) as cofactor.

The enzyme catalyses 7-aminomethyl-7-carbaguanine + guanosine(34) in tRNA = 7-aminomethyl-7-carbaguanosine(34) in tRNA + guanine. It functions in the pathway tRNA modification; tRNA-queuosine biosynthesis. Its function is as follows. Catalyzes the base-exchange of a guanine (G) residue with the queuine precursor 7-aminomethyl-7-deazaguanine (PreQ1) at position 34 (anticodon wobble position) in tRNAs with GU(N) anticodons (tRNA-Asp, -Asn, -His and -Tyr). Catalysis occurs through a double-displacement mechanism. The nucleophile active site attacks the C1' of nucleotide 34 to detach the guanine base from the RNA, forming a covalent enzyme-RNA intermediate. The proton acceptor active site deprotonates the incoming PreQ1, allowing a nucleophilic attack on the C1' of the ribose to form the product. After dissociation, two additional enzymatic reactions on the tRNA convert PreQ1 to queuine (Q), resulting in the hypermodified nucleoside queuosine (7-(((4,5-cis-dihydroxy-2-cyclopenten-1-yl)amino)methyl)-7-deazaguanosine). The chain is Queuine tRNA-ribosyltransferase from Neisseria gonorrhoeae (strain ATCC 700825 / FA 1090).